The following is a 508-amino-acid chain: Photosystem II CP47 reaction center protein (508 aa).

6 helical membrane passes run 21–36 (AVHI…WAGS), 101–115 (IVFS…IWHW), 140–156 (GIHL…FGAF), 203–218 (IAAG…FHLS), 237–252 (VLSS…AFVV), and 457–472 (SFAL…HGSR).

This sequence belongs to the PsbB/PsbC family. PsbB subfamily. In terms of assembly, PSII is composed of 1 copy each of membrane proteins PsbA, PsbB, PsbC, PsbD, PsbE, PsbF, PsbH, PsbI, PsbJ, PsbK, PsbL, PsbM, PsbT, PsbX, PsbY, PsbZ, Psb30/Ycf12, at least 3 peripheral proteins of the oxygen-evolving complex and a large number of cofactors. It forms dimeric complexes. It depends on Binds multiple chlorophylls. PSII binds additional chlorophylls, carotenoids and specific lipids. as a cofactor.

Its subcellular location is the plastid. The protein resides in the chloroplast thylakoid membrane. One of the components of the core complex of photosystem II (PSII). It binds chlorophyll and helps catalyze the primary light-induced photochemical processes of PSII. PSII is a light-driven water:plastoquinone oxidoreductase, using light energy to abstract electrons from H(2)O, generating O(2) and a proton gradient subsequently used for ATP formation. This chain is Photosystem II CP47 reaction center protein, found in Lotus japonicus (Lotus corniculatus var. japonicus).